The following is a 228-amino-acid chain: MNNIIIKCINLNKSYKDGDFTYTILKNISFQLNKGDIAGIIGKSGSGKTTFLHLLAGLENPTSGDILFNGRLFSSMSSNKMSKFRNIELGFIYQFHHLMLDFNILENVSMPLLISNKSKKDSEEIAYNMLKKFNLEDKIKKYPSELSGGERQRVAVARAFINKPSLIIADEPTGNLDEDNTNIIFNLITELNSDYNTSFIIATHDPTLIKKIPVLFKIENNQIFNYES.

The ABC transporter domain maps to Ile6–Ser228. An ATP-binding site is contributed by Gly42 to Thr49.

The protein belongs to the ABC transporter superfamily. Lipoprotein translocase (TC 3.A.1.125) family.

Its subcellular location is the cell inner membrane. Usually LolD forms an ABC transporter complex with LolC and LolE involved in the translocation of lipoprotein, in an ATP-dependent manner. However, LolE is certainly not functional as it is frameshifted. This chain is Lipoprotein-releasing system ATP-binding protein LolD, found in Buchnera aphidicola subsp. Acyrthosiphon pisum (strain APS) (Acyrthosiphon pisum symbiotic bacterium).